The following is a 138-amino-acid chain: Gastrula zinc finger protein XlCGF44.2 (138 aa).

5 C2H2-type zinc fingers span residues 5-27 (FACT…KRIH), 32-54 (FVCA…QRLH), 60-82 (FTCT…QQIH), 88-110 (YVCS…MKTH), and 116-138 (FACS…QESH).

It belongs to the krueppel C2H2-type zinc-finger protein family.

The protein localises to the nucleus. Its function is as follows. May be involved in transcriptional regulation. This is Gastrula zinc finger protein XlCGF44.2 from Xenopus laevis (African clawed frog).